Here is a 519-residue protein sequence, read N- to C-terminus: Circadian clock oscillator protein KaiC (519 aa).

KaiC domains are found at residues 1–246 (MSEK…VNIF) and 260–519 (VRVS…GSDS). ATP contacts are provided by Gly48, Thr49, Gly50, Lys51, Thr52, Leu53, Lys223, Leu224, Arg225, Thr227, His229, Thr239, Thr289, Gly290, Thr291, Gly292, Lys293, Thr294, and Leu295. Position 52 (Thr52) interacts with Mg(2+). A Mg(2+)-binding site is contributed by Thr294. Glu317 serves as a coordination point for Mg(2+). Trp330 contributes to the ATP binding site. At Ser430 the chain carries Phosphoserine; by autocatalysis. At Thr431 the chain carries Phosphothreonine; by autocatalysis. Positions 450, 456, 457, 458, 460, 462, and 464 each coordinate ATP.

It belongs to the KaiC family. Homohexamer; hexamerization is dependent on ATP-binding. The KaiABC complex composition changes during the circadian cycle to control KaiC phosphorylation. Complexes KaiC(6), KaiA(2-4):KaiC(6), KaiB(6):KaiC(6) and KaiC(6):KaiB(6):KaiA(12) are among the most important forms, many form cooperatively. KaiC interacts with SasA, activating its autokinase function and leading to RpaA activation. Mg(2+) serves as cofactor. Post-translationally, phosphorylated on serine and threonine residues by autocatalysis. Has a 4 step phosphorylation cycle; the autokinase acts first on Thr-431, then Ser-430. When Ser-430 is modified KaiC switches to an autophosphatase mode, acting first on phospho-Thr-431 then phospho-Ser-430.

It carries out the reaction L-seryl-[protein] + ATP = O-phospho-L-seryl-[protein] + ADP + H(+). The enzyme catalyses L-threonyl-[protein] + ATP = O-phospho-L-threonyl-[protein] + ADP + H(+). It catalyses the reaction ATP + H2O = ADP + phosphate + H(+). Its activity is regulated as follows. The interaction with KaiA enhances its phosphorylation status, while the interaction with KaiB decreases it. In terms of biological role, central component of the KaiABC oscillator complex, which constitutes the main circadian regulator in cyanobacteria. Complex composition changes during the circadian cycle to control KaiC phosphorylation. KaiA stimulates KaiC autophosphorylation, while KaiB sequesters KaiA, leading to KaiC autodephosphorylation. Clock output pathways impact the RpaA transcriptional regulator. KaiC enhances the autophosphorylation activity of SasA, which then transfers its phosphate group to RpaA to activate it. KaiB and KaiC together enhance the phospho-RpaA dephosphatase activity of CikA. Functionally, has a weak, temperature-independent ATPase activity; ATPase activity defines the circadian period. The phosphorylation state of KaiC modulates its ATPase activity and effects KaiB binding. The protein is Circadian clock oscillator protein KaiC of Nostoc sp. (strain PCC 7120 / SAG 25.82 / UTEX 2576).